The chain runs to 379 residues: uncharacterized protein (379 aa).

The chain crosses the membrane as a helical span at residues 9–26 (YFQLITTIFLISSITIAA).

It to A.liquefaciens L-sorbosone dehydrogenase.

Its subcellular location is the membrane. This is an uncharacterized protein from Borreliella burgdorferi (strain ATCC 35210 / DSM 4680 / CIP 102532 / B31) (Borrelia burgdorferi).